Here is a 342-residue protein sequence, read N- to C-terminus: Dihydroorotase (342 aa).

2 residues coordinate Zn(2+): H13 and H15. Substrate is bound by residues 15 to 17 (HLR) and N41. Zn(2+)-binding residues include K97, H134, and H172. At K97 the chain carries N6-carboxylysine. H134 is a binding site for substrate. L217 is a binding site for substrate. D245 contributes to the Zn(2+) binding site. D245 is an active-site residue. Substrate is bound by residues H249 and A261.

This sequence belongs to the metallo-dependent hydrolases superfamily. DHOase family. Class II DHOase subfamily. In terms of assembly, homodimer. Requires Zn(2+) as cofactor.

The catalysed reaction is (S)-dihydroorotate + H2O = N-carbamoyl-L-aspartate + H(+). The protein operates within pyrimidine metabolism; UMP biosynthesis via de novo pathway; (S)-dihydroorotate from bicarbonate: step 3/3. Functionally, catalyzes the reversible cyclization of carbamoyl aspartate to dihydroorotate. In Shewanella amazonensis (strain ATCC BAA-1098 / SB2B), this protein is Dihydroorotase.